We begin with the raw amino-acid sequence, 1238 residues long: Virulence sensor protein BvgS (1238 aa).

The signal sequence occupies residues 1–32; that stretch reads MPAPHRLYPRSLICLAQALLVWALLAWAPAQA. At 33–307 the chain is on the cytoplasmic side; that stretch reads SQELTLVGKA…REQQWMANHP (275 aa). A helical transmembrane segment spans residues 308 to 331; that stretch reads VVKVAVLNLFAPFTLFRTDEQFGG. The Periplasmic segment spans residues 332 to 541; it reads ISAAVLQLLQ…PRTWYAYRNE (210 aa). A helical membrane pass occupies residues 542 to 563; the sequence is IYLLIGLGLLSALLFLSWIVYL. The Cytoplasmic segment spans residues 564 to 1238; sequence RRQIRQRKRA…LEQRPHQGQP (675 aa). The 72-residue stretch at 580–651 folds into the PAS domain; that stretch reads QLEFMRVLID…MHEFLLTRMA (72 aa). One can recognise a PAC domain in the interval 652–708; that stretch reads AEREPRFEDRDVTLHGRTRHVYQWTVPYGDSLGELKGIIGGWIDITERAELLRELHD. The 223-residue stretch at 726-948 folds into the Histidine kinase domain; sequence TMSHEIRTPM…TVSVDLRLTM (223 aa). At His-729 the chain carries Phosphohistidine; by autocatalysis. In terms of domain architecture, Response regulatory spans 974–1095; it reads RVLVVDDHKP…ALRQRLNEAA (122 aa). 4-aspartylphosphate is present on Asp-1023. The HPt domain occupies 1133–1228; the sequence is DEALIRQLLE…AALETQLRAW (96 aa). His-1172 carries the post-translational modification Phosphohistidine.

In terms of processing, activation requires a sequential transfer of a phosphate group from a His in the primary transmitter domain, to an Asp in the receiver domain and to a His in the secondary transmitter domain.

Its subcellular location is the cell inner membrane. It catalyses the reaction ATP + protein L-histidine = ADP + protein N-phospho-L-histidine.. Member of the two-component regulatory system BvgS/BvgA. Phosphorylates BvgA via a four-step phosphorelay in response to environmental signals. This is Virulence sensor protein BvgS (bvgS) from Bordetella parapertussis (strain 12822 / ATCC BAA-587 / NCTC 13253).